A 419-amino-acid polypeptide reads, in one-letter code: UDP-N-acetylglucosamine 1-carboxyvinyltransferase (419 aa).

22 to 23 (KN) serves as a coordination point for phosphoenolpyruvate. Arg91 contacts UDP-N-acetyl-alpha-D-glucosamine. Residue Cys115 is the Proton donor of the active site. Residue Cys115 is modified to 2-(S-cysteinyl)pyruvic acid O-phosphothioketal. UDP-N-acetyl-alpha-D-glucosamine-binding positions include 120–124 (RPVDL), 160–163 (KVSV), Asp305, and Val327.

The protein belongs to the EPSP synthase family. MurA subfamily.

The protein localises to the cytoplasm. The catalysed reaction is phosphoenolpyruvate + UDP-N-acetyl-alpha-D-glucosamine = UDP-N-acetyl-3-O-(1-carboxyvinyl)-alpha-D-glucosamine + phosphate. It participates in cell wall biogenesis; peptidoglycan biosynthesis. In terms of biological role, cell wall formation. Adds enolpyruvyl to UDP-N-acetylglucosamine. This is UDP-N-acetylglucosamine 1-carboxyvinyltransferase from Shigella boydii serotype 18 (strain CDC 3083-94 / BS512).